The following is a 77-amino-acid chain: Putative antitoxin VapB3 (77 aa).

Residues Arg-10–Ala-60 are a coiled coil.

In terms of assembly, forms a complex with putative toxin VapC3, possibly VapB(2)-VapC(2).

Its function is as follows. Antitoxin component of a type II toxin-antitoxin (TA) system. This chain is Putative antitoxin VapB3 (vAPb3), found in Pyrobaculum aerophilum (strain ATCC 51768 / DSM 7523 / JCM 9630 / CIP 104966 / NBRC 100827 / IM2).